Here is a 653-residue protein sequence, read N- to C-terminus: Macrolide export ATP-binding/permease protein MacB (653 aa).

An ABC transporter domain is found at 6 to 244 (IELQGVSRSY…PPLLPCSAHP (239 aa)). 42–49 (GSSGSGKS) contacts ATP. A run of 4 helical transmembrane segments spans residues 275-295 (LLTM…VGLG), 525-545 (FSVL…LGVM), 576-596 (FLIE…LLAL), and 616-636 (WPAV…FGYW).

The protein belongs to the ABC transporter superfamily. Macrolide exporter (TC 3.A.1.122) family. As to quaternary structure, homodimer. Part of the tripartite efflux system MacAB-TolC, which is composed of an inner membrane transporter, MacB, a periplasmic membrane fusion protein, MacA, and an outer membrane component, TolC. The complex forms a large protein conduit and can translocate molecules across both the inner and outer membranes. Interacts with MacA.

It is found in the cell inner membrane. Part of the tripartite efflux system MacAB-TolC. MacB is a non-canonical ABC transporter that contains transmembrane domains (TMD), which form a pore in the inner membrane, and an ATP-binding domain (NBD), which is responsible for energy generation. Confers resistance against macrolides. The protein is Macrolide export ATP-binding/permease protein MacB of Sodalis glossinidius (strain morsitans).